An 876-amino-acid polypeptide reads, in one-letter code: Ergothioneine biosynthesis protein 1 (876 aa).

The L-histidine N(alpha)-methyltransferase stretch occupies residues 36–350 (IIDIRRVAVE…TYGNEYGLHL (315 aa)). Residue Tyr88 participates in L-histidine binding. Residues Gly119, Lys125, and Asp146 each coordinate S-adenosyl-L-methionine. L-histidine contacts are provided by residues Asn202, Tyr242, and 315-317 (EQS). The segment at 378–874 (ALWATWDVVT…YAWVGARVVR (497 aa)) is hercynylcysteine S-oxide synthase. Fe cation-binding residues include His413, His506, and His510. 2 disordered regions span residues 631–650 (GTTN…QQLP) and 732–761 (TNNG…SNTT). The segment covering 744-758 (PSSETPAESSSPSDS) has biased composition (low complexity).

It in the N-terminal section; belongs to the methyltransferase superfamily. EgtD family. In the C-terminal section; belongs to the EgtB family. Fe(2+) serves as cofactor.

The protein resides in the cytoplasm. Its subcellular location is the nucleus. It carries out the reaction L-histidine + 3 S-adenosyl-L-methionine = hercynine + 3 S-adenosyl-L-homocysteine + 3 H(+). The enzyme catalyses hercynine + L-cysteine + O2 = S-(hercyn-2-yl)-L-cysteine S-oxide + H2O. The protein operates within amino-acid biosynthesis; ergothioneine biosynthesis. Catalyzes the SAM-dependent triple methylation of the alpha-amino group of histidine to form hercynine and subsequent conjugation with cysteine and oxygen to form hercynylcysteine sulfoxide, the first two steps in the biosynthesis pathway of ergothioneine. Ergothioneine is an unusual thio-histidine betaine amino acid that acts as an antioxidant against peroxide in conidia and contributes to conidial longevity. This chain is Ergothioneine biosynthesis protein 1, found in Neurospora crassa (strain ATCC 24698 / 74-OR23-1A / CBS 708.71 / DSM 1257 / FGSC 987).